A 227-amino-acid polypeptide reads, in one-letter code: MFKRMAEFGPDSGGRVKGVTIVKPIVYGNVARYFGKKREEDGHTHQWTVYVKPYRNEDMSAYVKKIQFKLHESYGNPLRVVTKPPYEITETGWGEFEIIIKIFFIDPNERPVTLYHLLKLFQSDTNAMLGKKTVVSEFYDEMIFQDPTAMMQQLLTTSRQLTLGAYKHETEFAELEVKTREKLEAAKKKTSFEIAELKERLKASRETINCLKNEIRKLEEDDQAKDI.

In terms of domain architecture, YEATS spans 15–158 (RVKGVTIVKP…AMMQQLLTTS (144 aa)). K37 is covalently cross-linked (Glycyl lysine isopeptide (Lys-Gly) (interchain with G-Cter in SUMO2)). The interval 93–97 (WGEFE) is diacetylated histone H3 binding. The tract at residues 163–227 (LGAYKHETEF…LEEDDQAKDI (65 aa)) is interaction with MLLT10. The interval 168-227 (HETEFAELEVKTREKLEAAKKKTSFEIAELKERLKASRETINCLKNEIRKLEEDDQAKDI) is interaction with TACC1. Positions 178 to 226 (KTREKLEAAKKKTSFEIAELKERLKASRETINCLKNEIRKLEEDDQAKD) form a coiled coil.

As to quaternary structure, component of numerous complexes with chromatin remodeling and histone acetyltransferase activity. Component of the NuA4 histone acetyltransferase complex which contains the catalytic subunit KAT5/TIP60 and the subunits EP400, TRRAP/PAF400, BRD8/SMAP, EPC1, DMAP1/DNMAP1, RUVBL1/TIP49, RUVBL2, ING3, actin, ACTL6A/BAF53A, MORF4L1/MRG15, MORF4L2/MRGX, MRGBP, YEATS4/GAS41, VPS72/YL1 and MEAF6. The NuA4 complex interacts with MYC and the adenovirus E1A protein. Component of a NuA4-related complex which contains EP400, TRRAP/PAF400, SRCAP, BRD8/SMAP, EPC1, DMAP1/DNMAP1, RUVBL1/TIP49, RUVBL2, actin, ACTL6A/BAF53A, VPS72 and YEATS4/GAS41. Interacts with MLLT10/AF10. Also interacts with the SWI/SNF component SMARCB1/BAF47, TACC1 and TACC2, and the nuclear matrix protein NUMA1. In terms of tissue distribution, expressed in brain, heart, kidney, liver, lung, pancreas, placenta and skeletal muscle.

The protein localises to the nucleus. Functionally, chromatin reader component of the NuA4 histone acetyltransferase (HAT) complex, a complex involved in transcriptional activation of select genes principally by acetylation of nucleosomal histones H4 and H2A. Specifically recognizes and binds acylated histone H3, with a preference for histone H3 diacetylated at 'Lys-18' and 'Lys-27' (H3K18ac and H3K27ac) or histone H3 diacetylated at 'Lys-14' and 'Lys-27' (H3K14ac and H3K27ac). Also able to recognize and bind crotonylated histone H3. May also recognize and bind histone H3 succinylated at 'Lys-122' (H3K122succ); additional evidences are however required to confirm this result in vivo. Plays a key role in histone variant H2AZ1/H2A.Z deposition into specific chromatin regions: recognizes and binds H3K14ac and H3K27ac on the promoters of actively transcribed genes and recruits NuA4-related complex to deposit H2AZ1/H2A.Z. H2AZ1/H2A.Z deposition is required for maintenance of embryonic stem cell. The chain is YEATS domain-containing protein 4 from Homo sapiens (Human).